Consider the following 307-residue polypeptide: Olfactory receptor 12D2 (307 aa).

The Extracellular portion of the chain corresponds to 1 to 23 (MLNTTSVTEFLLLGVTDIQELQP). The N-linked (GlcNAc...) asparagine glycan is linked to asparagine 3. The chain crosses the membrane as a helical span at residues 24–44 (FLFVVFLTIYFISVTGNGAVL). The Cytoplasmic portion of the chain corresponds to 45–52 (MIVISDPR). Residues 53–73 (LHSLMYFFLGNLSYLDICYST) form a helical membrane-spanning segment. Topologically, residues 74–97 (VTLPKMLQNFLSTHKAISFLGCIS) are extracellular. Cysteine 95 and cysteine 187 are disulfide-bonded. The helical transmembrane segment at 98–118 (QLHFFHSLGSTESMLFAVMAF) threads the bilayer. The Cytoplasmic segment spans residues 119-137 (DLSVAICKPLRYTVIMNPQ). A helical transmembrane segment spans residues 138–158 (LCTQMAITIWVIGFFHALLHS). The Extracellular segment spans residues 159–195 (VMTSRLNFCGSNRIHHFLCDIKPLLKLACGNTELNQW). A helical transmembrane segment spans residues 196–215 (LLSTVTGTIAMGPFFLTLLS). The Cytoplasmic portion of the chain corresponds to 216-236 (YFYIITYLFFKTRSCSMLCKA). A helical transmembrane segment spans residues 237–257 (LSTCASHFMVVILFYAPVLFT). Residues 258 to 270 (YIHPALESFMDQD) lie on the Extracellular side of the membrane. Residues 271–291 (RIVAIMYTVVTPVLNPLIYTL) form a helical membrane-spanning segment. Over 292-307 (RNKEVKGALGRVIRRL) the chain is Cytoplasmic.

This sequence belongs to the G-protein coupled receptor 1 family.

It localises to the cell membrane. Functionally, odorant receptor. The sequence is that of Olfactory receptor 12D2 (OR12D2) from Homo sapiens (Human).